The sequence spans 140 residues: Large ribosomal subunit protein uL24 (140 aa).

The protein belongs to the universal ribosomal protein uL24 family. As to quaternary structure, part of the 50S ribosomal subunit.

One of two assembly initiator proteins, it binds directly to the 5'-end of the 23S rRNA, where it nucleates assembly of the 50S subunit. In terms of biological role, located at the polypeptide exit tunnel on the outside of the subunit. In Nanoarchaeum equitans (strain Kin4-M), this protein is Large ribosomal subunit protein uL24.